A 628-amino-acid polypeptide reads, in one-letter code: DNA ligase (628 aa).

Residues 36–40 (DVEYD), 85–86 (SL), and Glu117 contribute to the NAD(+) site. Catalysis depends on Lys119, which acts as the N6-AMP-lysine intermediate. Residues Arg140, Glu174, Lys309, and Lys333 each coordinate NAD(+). Residues Cys427, Cys430, Cys446, and Cys452 each contribute to the Zn(2+) site.

This sequence belongs to the NAD-dependent DNA ligase family. LigA subfamily. The cofactor is Mg(2+). Requires Mn(2+) as cofactor.

The enzyme catalyses NAD(+) + (deoxyribonucleotide)n-3'-hydroxyl + 5'-phospho-(deoxyribonucleotide)m = (deoxyribonucleotide)n+m + AMP + beta-nicotinamide D-nucleotide.. Its function is as follows. DNA ligase that catalyzes the formation of phosphodiester linkages between 5'-phosphoryl and 3'-hydroxyl groups in double-stranded DNA using NAD as a coenzyme and as the energy source for the reaction. It is essential for DNA replication and repair of damaged DNA. This chain is DNA ligase, found in Tropheryma whipplei (strain Twist) (Whipple's bacillus).